Consider the following 43-residue polypeptide: Protein PsbN (43 aa).

A helical transmembrane segment spans residues 7–27 (LIIFIASLLLGLTGYSIYTAF).

The protein belongs to the PsbN family.

It is found in the plastid. It localises to the chloroplast thylakoid membrane. May play a role in photosystem I and II biogenesis. This Guillardia theta (Cryptophyte) protein is Protein PsbN.